The following is a 313-amino-acid chain: Intelectin-like protein (313 aa).

Positions 33–251 (TSCCSQTSPG…NNEKAPMALC (219 aa)) constitute a Fibrinogen C-terminal domain. Residues His86, Glu87, Asn89, Gly92, Gly97, Asp98, and Asp133 each coordinate Ca(2+). Cystine bridges form between Cys94–Cys280, Cys199–Cys259, and Cys251–Cys265. Residues Asn260, Glu262, Glu274, and Asp282 each coordinate Ca(2+). A carbohydrate is bound by residues 262 to 263 (EH) and Glu274.

In terms of assembly, monomer, homodimer, homotrimer and homotetramer. Mostly monomeric or dimeric.

The protein localises to the secreted. Binds mannan, mannose and, to a lesser degree, D-lactose, N-acetylgalactosamine, N-acetylglucosamine and beta-D-glucose. This is Intelectin-like protein from Alligator mississippiensis (American alligator).